A 155-amino-acid chain; its full sequence is MAKSKPKDNALAQNRKARHDYNILETYEAGIALTGTEIKSVRASRINLKDGFAQVKNGEVWLMNVHISLYDQGNIFNHDPLRNRKLLLHKKEIKHLSEETQKKGITIVPLKVYIKNGFAKVLIGIAQGKHVYDKRETIKRRDQEREIRRTLKNYG.

The protein belongs to the SmpB family.

It is found in the cytoplasm. In terms of biological role, required for rescue of stalled ribosomes mediated by trans-translation. Binds to transfer-messenger RNA (tmRNA), required for stable association of tmRNA with ribosomes. tmRNA and SmpB together mimic tRNA shape, replacing the anticodon stem-loop with SmpB. tmRNA is encoded by the ssrA gene; the 2 termini fold to resemble tRNA(Ala) and it encodes a 'tag peptide', a short internal open reading frame. During trans-translation Ala-aminoacylated tmRNA acts like a tRNA, entering the A-site of stalled ribosomes, displacing the stalled mRNA. The ribosome then switches to translate the ORF on the tmRNA; the nascent peptide is terminated with the 'tag peptide' encoded by the tmRNA and targeted for degradation. The ribosome is freed to recommence translation, which seems to be the essential function of trans-translation. In Ligilactobacillus salivarius (strain UCC118) (Lactobacillus salivarius), this protein is SsrA-binding protein.